The chain runs to 122 residues: Small ribosomal subunit protein uS13 (122 aa).

Positions 94–122 (LSLPVRGQRTKTNSRTRKGKRKTVAGKKK) are disordered. The span at 101-122 (QRTKTNSRTRKGKRKTVAGKKK) shows a compositional bias: basic residues.

This sequence belongs to the universal ribosomal protein uS13 family. In terms of assembly, part of the 30S ribosomal subunit. Forms a loose heterodimer with protein S19. Forms two bridges to the 50S subunit in the 70S ribosome.

In terms of biological role, located at the top of the head of the 30S subunit, it contacts several helices of the 16S rRNA. In the 70S ribosome it contacts the 23S rRNA (bridge B1a) and protein L5 of the 50S subunit (bridge B1b), connecting the 2 subunits; these bridges are implicated in subunit movement. Contacts the tRNAs in the A and P-sites. The chain is Small ribosomal subunit protein uS13 from Chlamydia muridarum (strain MoPn / Nigg).